A 183-amino-acid chain; its full sequence is Potassium-transporting ATPase KdpC subunit (183 aa).

The helical transmembrane segment at 10 to 30 (LTVFTLILFAVIYPLAIYGIA) threads the bilayer.

It belongs to the KdpC family. As to quaternary structure, the system is composed of three essential subunits: KdpA, KdpB and KdpC.

The protein localises to the cell inner membrane. Its function is as follows. Part of the high-affinity ATP-driven potassium transport (or Kdp) system, which catalyzes the hydrolysis of ATP coupled with the electrogenic transport of potassium into the cytoplasm. This subunit acts as a catalytic chaperone that increases the ATP-binding affinity of the ATP-hydrolyzing subunit KdpB by the formation of a transient KdpB/KdpC/ATP ternary complex. This is Potassium-transporting ATPase KdpC subunit from Flavobacterium johnsoniae (strain ATCC 17061 / DSM 2064 / JCM 8514 / BCRC 14874 / CCUG 350202 / NBRC 14942 / NCIMB 11054 / UW101) (Cytophaga johnsonae).